The following is a 189-amino-acid chain: Elongation factor P (189 aa).

N6-(3,6-diaminohexanoyl)-5-hydroxylysine is present on K34.

This sequence belongs to the elongation factor P family. Post-translationally, may be beta-lysylated on the epsilon-amino group of Lys-34 by the combined action of EpmA and EpmB, and then hydroxylated on the C5 position of the same residue by EpmC (if this protein is present). Lysylation is critical for the stimulatory effect of EF-P on peptide-bond formation. The lysylation moiety may extend toward the peptidyltransferase center and stabilize the terminal 3-CCA end of the tRNA. Hydroxylation of the C5 position on Lys-34 may allow additional potential stabilizing hydrogen-bond interactions with the P-tRNA.

Its subcellular location is the cytoplasm. It functions in the pathway protein biosynthesis; polypeptide chain elongation. Functionally, involved in peptide bond synthesis. Alleviates ribosome stalling that occurs when 3 or more consecutive Pro residues or the sequence PPG is present in a protein, possibly by augmenting the peptidyl transferase activity of the ribosome. Modification of Lys-34 is required for alleviation. In Baumannia cicadellinicola subsp. Homalodisca coagulata, this protein is Elongation factor P.